We begin with the raw amino-acid sequence, 358 residues long: Secreted protein RBT4 (358 aa).

A signal peptide spans 1–19 (MKFSQVATTAAIFAGLTTA). Low complexity-rich tracts occupy residues 48–63 (VTGG…QSAA), 153–174 (TTEV…VATP), and 189–200 (AATTASGSSSGS). Disordered stretches follow at residues 48–98 (VTGG…DGGN) and 144–203 (GFPS…SNDF). Residues 216–332 (LDAHNKKRAR…NWGLYVVCSY (117 aa)) form the SCP domain.

Belongs to the CRISP family.

Its subcellular location is the secreted. Functionally, secreted protein that acts as a virulence factor during infections such as in posttraumatic corneal infections. Acts as an important antigen in patients with systemic candidiasis and plays a role in the protection against phagocyte attack. The sequence is that of Secreted protein RBT4 (RBT4) from Candida albicans (strain SC5314 / ATCC MYA-2876) (Yeast).